The chain runs to 447 residues: Na(+)/H(+) antiporter NhaA 2 (447 aa).

Helical transmembrane passes span 30 to 50, 81 to 101, 117 to 137, 146 to 166, 175 to 195, 199 to 219, 220 to 240, 315 to 335, 350 to 370, 383 to 403, and 415 to 435; these read FIHIESAAGIVLFISTLLAVL, LHKWVNDAGMTLFFFLIALEL, LLSIAAALGGMSTPPLFYLLL, GWGTVMATDTAFVIGCLALLG, IFMLSMAVVDDIGAIFVVAIG, AVDWLVLSYALLGFMLVRAMA, FLGVRSLVLFSIVGGAIWLVI, LLHPWVGFVVLPLFALANAGV, VFVGFVFGKPIGIVLFSWIAV, WGMVFGGGMLAGIGFTMALFI, and AAKLGIFIASITSALIGFLCL.

The protein belongs to the NhaA Na(+)/H(+) (TC 2.A.33) antiporter family.

The protein localises to the cell inner membrane. The catalysed reaction is Na(+)(in) + 2 H(+)(out) = Na(+)(out) + 2 H(+)(in). Na(+)/H(+) antiporter that extrudes sodium in exchange for external protons. This is Na(+)/H(+) antiporter NhaA 2 from Vibrio vulnificus (strain CMCP6).